A 468-amino-acid chain; its full sequence is Argininosuccinate lyase (468 aa).

The protein belongs to the lyase 1 family. Argininosuccinate lyase subfamily.

Its subcellular location is the cytoplasm. It carries out the reaction 2-(N(omega)-L-arginino)succinate = fumarate + L-arginine. It participates in amino-acid biosynthesis; L-arginine biosynthesis; L-arginine from L-ornithine and carbamoyl phosphate: step 3/3. This chain is Argininosuccinate lyase, found in Alkalilimnicola ehrlichii (strain ATCC BAA-1101 / DSM 17681 / MLHE-1).